The chain runs to 308 residues: V-type immunoglobulin domain-containing suppressor of T-cell activation (308 aa).

Residues M1 to A32 form the signal peptide. Positions F33–V167 constitute an Ig-like V-type domain. The Extracellular segment spans residues F33–A191. N-linked (GlcNAc...) asparagine glycosylation is found at N49, N91, and N127. An intrachain disulfide couples C54 to C145. Residues A192 to V212 form a helical membrane-spanning segment. At Y213–I308 the chain is on the cytoplasmic side. A disordered region spans residues M230–I308. Residue S232 is modified to Phosphoserine.

At the cell surface, may be cleaved by MMP14. Post-translationally, N-glycosylated. Expressed in spleen, thymus, bone marrow, lymph node, and in T-cells within the lamina propria of the small intestine. Detected on CD4+ and CD8+ T-cells, bone marrow-derived dendritic cells (BMDCs), peritoneal macrophages, neutrophils, and natural killer (NK) cells. In spleen and lymph nodes, highly expressed on CD4+ T-cell populations, and at lower levels on CD8+ T-cells. In thymus, has low expression on CD4+ cells and CD8+ cells, and not detected on CD4+CD8+ cells. Expressed in splenic and peritoneal CD11b cells. Not detected in most B cells and NK cells (at protein level). Also detected at lower levels in non-hematopoeitic tissues such as heart, brain, lung, kidney, muscle, ovary, and testis.

The protein localises to the cell membrane. Functionally, immunoregulatory receptor which inhibits the T-cell response. May promote differentiation of embryonic stem cells, by inhibiting BMP4 signaling. May stimulate MMP14-mediated MMP2 activation. The sequence is that of V-type immunoglobulin domain-containing suppressor of T-cell activation from Mus musculus (Mouse).